The following is a 432-amino-acid chain: MVNVVLGSQWGDEGKGKLVDLLVGKYDIVARCAGGNNAGHTIVVNGIKYDFHMLPSGLVNPNCSNLLGNGVVIHVPSLFSELNNLSEKGLKDCDKRLFISSRAHIVFDFHQHTDKLRELELKGISKDGKNIGTTGKGIGPTYSTKASRSGLRVHHLVNDQPGAWEEFEAKYRRLLKTRRERYGDFEYDPEEELNRYKKYKELLKPMVVDSVFFINNAIANGKKILVEGANALMLDIDFGTYPFVTSSSTGIGGVITGLGVSPRHINEVYGVVKAYTTRVGEGPFPTEQLNEQGEKLQTIGAEFGVTTGRKRRCGWLDLVVLKYSAMINGYTSLNITKLDVLDTFKEIPVGVSYSINGKKLDSFPEDLINLGNVDVEYVTLPGWDQDITKITEFDQLPENAKKYLKFIEDFVGIPIEWVGTGPARESMLHRDV.

GTP-binding positions include 11–17 and 39–41; these read GDEGKGK and GHT. D12 serves as the catalytic Proton acceptor. Positions 12 and 39 each coordinate Mg(2+). IMP is bound by residues 12 to 15, 37 to 40, T134, R148, N230, T245, and R309; these read DEGK and NAGH. H40 (proton donor) is an active-site residue. 305–311 provides a ligand contact to substrate; it reads VTTGRKR. GTP-binding positions include R311, 337–339, and 419–421; these read KLD and GTG.

It belongs to the adenylosuccinate synthetase family. In terms of assembly, homodimer. Mg(2+) serves as cofactor.

The protein localises to the cytoplasm. The catalysed reaction is IMP + L-aspartate + GTP = N(6)-(1,2-dicarboxyethyl)-AMP + GDP + phosphate + 2 H(+). It functions in the pathway purine metabolism; AMP biosynthesis via de novo pathway; AMP from IMP: step 1/2. Functionally, plays an important role in the de novo pathway and in the salvage pathway of purine nucleotide biosynthesis. Catalyzes the first committed step in the biosynthesis of AMP from IMP. The protein is Adenylosuccinate synthetase of Vanderwaltozyma polyspora (strain ATCC 22028 / DSM 70294 / BCRC 21397 / CBS 2163 / NBRC 10782 / NRRL Y-8283 / UCD 57-17) (Kluyveromyces polysporus).